The following is a 572-amino-acid chain: Sulfite reductase [NADPH] hemoprotein beta-component (572 aa).

Positions 437, 443, 482, and 486 each coordinate [4Fe-4S] cluster. Cysteine 486 serves as a coordination point for siroheme.

This sequence belongs to the nitrite and sulfite reductase 4Fe-4S domain family. In terms of assembly, alpha(8)-beta(8). The alpha component is a flavoprotein, the beta component is a hemoprotein. Siroheme serves as cofactor. Requires [4Fe-4S] cluster as cofactor.

The catalysed reaction is hydrogen sulfide + 3 NADP(+) + 3 H2O = sulfite + 3 NADPH + 4 H(+). The protein operates within sulfur metabolism; hydrogen sulfide biosynthesis; hydrogen sulfide from sulfite (NADPH route): step 1/1. Its function is as follows. Component of the sulfite reductase complex that catalyzes the 6-electron reduction of sulfite to sulfide. This is one of several activities required for the biosynthesis of L-cysteine from sulfate. The protein is Sulfite reductase [NADPH] hemoprotein beta-component of Bacillus licheniformis (strain ATCC 14580 / DSM 13 / JCM 2505 / CCUG 7422 / NBRC 12200 / NCIMB 9375 / NCTC 10341 / NRRL NRS-1264 / Gibson 46).